A 248-amino-acid polypeptide reads, in one-letter code: MAGHSQFKNIMHRKGRQDAQRSKLFSKLAREITVAAKLGTPDPAMNPRLRAAVLAARAENMPKDNIERAIKKAIGGDSENYDEIRYEGYGPGGVAVIVEALTDNRNRAASDIRSFFTKSGGNLGETGSVSFMFDRTGIIEYDADKASADDMLDAAIEAGADDVVSSEAGHEIYASQETFRDVAKALEAKFGEARKAAVIWKPQNTVAVDDETGEKLFKLMDALNDHDDVQNVYANFEVSDALMAKMAG.

The tract at residues 1 to 21 (MAGHSQFKNIMHRKGRQDAQR) is disordered.

The protein belongs to the TACO1 family.

Its subcellular location is the cytoplasm. The sequence is that of Probable transcriptional regulatory protein RPA1097 from Rhodopseudomonas palustris (strain ATCC BAA-98 / CGA009).